A 480-amino-acid polypeptide reads, in one-letter code: Glutamate--tRNA ligase (480 aa).

A 'HIGH' region motif is present at residues 21–31 (PSPTGYLHVGG). Zn(2+)-binding residues include C110, C112, C137, and H139. The 'KMSKS' region signature appears at 248-252 (KLSKR). K251 is a binding site for ATP.

It belongs to the class-I aminoacyl-tRNA synthetase family. Glutamate--tRNA ligase type 1 subfamily. Monomer. The cofactor is Zn(2+).

The protein localises to the cytoplasm. It carries out the reaction tRNA(Glu) + L-glutamate + ATP = L-glutamyl-tRNA(Glu) + AMP + diphosphate. Functionally, catalyzes the attachment of glutamate to tRNA(Glu) in a two-step reaction: glutamate is first activated by ATP to form Glu-AMP and then transferred to the acceptor end of tRNA(Glu). The chain is Glutamate--tRNA ligase from Haemophilus influenzae (strain PittEE).